The following is a 218-amino-acid chain: Thiopurine S-methyltransferase (218 aa).

S-adenosyl-L-methionine contacts are provided by Trp10, Leu45, Glu66, and Arg123.

It belongs to the class I-like SAM-binding methyltransferase superfamily. TPMT family.

The protein resides in the cytoplasm. It carries out the reaction S-adenosyl-L-methionine + a thiopurine = S-adenosyl-L-homocysteine + a thiopurine S-methylether.. This is Thiopurine S-methyltransferase from Shewanella oneidensis (strain ATCC 700550 / JCM 31522 / CIP 106686 / LMG 19005 / NCIMB 14063 / MR-1).